The sequence spans 107 residues: Multidrug resistance protein mmr (107 aa).

Transmembrane regions (helical) follow at residues 2 to 19 (AYLF…ATTL), 29 to 51 (LVPT…LSIS), 58 to 77 (VAYA…IAVL), and 82 to 104 (PVSV…LNLA).

This sequence belongs to the drug/metabolite transporter (DMT) superfamily. Small multidrug resistance (SMR) (TC 2.A.7.1) family. Mmr subfamily.

It is found in the cell membrane. In terms of biological role, multidrug efflux pump. Confers resistance to tetraphenylphosphonium (TPP), erythromycin, ethidium bromide, acriflavine, safranin O and pyronin Y. In Mycobacterium leprae (strain TN), this protein is Multidrug resistance protein mmr (mmr).